We begin with the raw amino-acid sequence, 354 residues long: MIRDENKQKALAAALAQIEKQFGKGSIMRLGEDRSMDVETISTGSLSLDIALGAGGLPMGRIVEIYGPESSGKTTLTLQVIAAAQREGKVCAFIDAEHALDPVYAKKLGVDIDNLLCSQPDTGEQALEICDSLTRSGAVDVIIVDSVAALVPKAEIEGEIGDSHMGLAARMMSQAMRKLAGNLKNANTLLIFINQIRMKIGVMFGNPETTTGGNALKFYASVRLDIRRVGAIKEGEMVIGNDTRVKVVKNKIAAPFKQADFQILYGEGINTHGELIDLGVKHQLVEKAGSWYSYNGTKIGQGKSNVTEYLKTNPSIAAELDKILRNRLLNPVCEKDKTDLDPLDKIYHENSTAF.

Residue 67 to 74 (GPESSGKT) participates in ATP binding.

It belongs to the RecA family.

The protein localises to the cytoplasm. In terms of biological role, can catalyze the hydrolysis of ATP in the presence of single-stranded DNA, the ATP-dependent uptake of single-stranded DNA by duplex DNA, and the ATP-dependent hybridization of homologous single-stranded DNAs. It interacts with LexA causing its activation and leading to its autocatalytic cleavage. The chain is Protein RecA from Hamiltonella defensa subsp. Acyrthosiphon pisum (strain 5AT).